The chain runs to 324 residues: tRNA U34 carboxymethyltransferase (324 aa).

Carboxy-S-adenosyl-L-methionine contacts are provided by residues lysine 92, tryptophan 106, lysine 111, glycine 131, 153-155, 182-183, methionine 197, tyrosine 201, and arginine 316; these read DPT and IE.

The protein belongs to the class I-like SAM-binding methyltransferase superfamily. CmoB family. As to quaternary structure, homotetramer.

It carries out the reaction carboxy-S-adenosyl-L-methionine + 5-hydroxyuridine(34) in tRNA = 5-carboxymethoxyuridine(34) in tRNA + S-adenosyl-L-homocysteine + H(+). Its function is as follows. Catalyzes carboxymethyl transfer from carboxy-S-adenosyl-L-methionine (Cx-SAM) to 5-hydroxyuridine (ho5U) to form 5-carboxymethoxyuridine (cmo5U) at position 34 in tRNAs. This is tRNA U34 carboxymethyltransferase from Proteus mirabilis (strain HI4320).